The chain runs to 303 residues: Diaminopimelate epimerase (303 aa).

Substrate contacts are provided by Asn15, Gln47, and Asn67. Catalysis depends on Cys76, which acts as the Proton donor. Substrate-binding positions include 77 to 78 (GN), Asn163, Asn197, and 215 to 216 (ER). Cys224 functions as the Proton acceptor in the catalytic mechanism. 225 to 226 (GS) is a substrate binding site. Positions 278 to 303 (FDPATGEWSRDTQGLQGSGNADRGAA) are disordered.

The protein belongs to the diaminopimelate epimerase family. Homodimer.

It is found in the cytoplasm. The catalysed reaction is (2S,6S)-2,6-diaminopimelate = meso-2,6-diaminopimelate. Its pathway is amino-acid biosynthesis; L-lysine biosynthesis via DAP pathway; DL-2,6-diaminopimelate from LL-2,6-diaminopimelate: step 1/1. Its function is as follows. Catalyzes the stereoinversion of LL-2,6-diaminopimelate (L,L-DAP) to meso-diaminopimelate (meso-DAP), a precursor of L-lysine and an essential component of the bacterial peptidoglycan. This is Diaminopimelate epimerase from Brucella melitensis biotype 1 (strain ATCC 23456 / CCUG 17765 / NCTC 10094 / 16M).